The chain runs to 238 residues: ATP synthase subunit a (238 aa).

5 helical membrane passes run 16–36, 79–99, 103–123, 129–149, and 209–229; these read LIWL…TVLF, GLFM…FFPV, FVFG…SSLL, GLMS…MVVV, and VFGA…CVLL.

It belongs to the ATPase A chain family. F-type ATPases have 2 components, CF(1) - the catalytic core - and CF(0) - the membrane proton channel. CF(1) has five subunits: alpha(3), beta(3), gamma(1), delta(1), epsilon(1). CF(0) has three main subunits: a, b and c.

The protein localises to the mitochondrion inner membrane. Mitochondrial membrane ATP synthase (F(1)F(0) ATP synthase or Complex V) produces ATP from ADP in the presence of a proton gradient across the membrane which is generated by electron transport complexes of the respiratory chain. F-type ATPases consist of two structural domains, F(1) - containing the extramembraneous catalytic core and F(0) - containing the membrane proton channel, linked together by a central stalk and a peripheral stalk. During catalysis, ATP synthesis in the catalytic domain of F(1) is coupled via a rotary mechanism of the central stalk subunits to proton translocation. Key component of the proton channel; it may play a direct role in the translocation of protons across the membrane. This Mytilus edulis (Blue mussel) protein is ATP synthase subunit a (ATP6).